The chain runs to 498 residues: Alpha-amylase A (498 aa).

Positions 1–21 (MMVAWWSLFLYGLQVAAPALA) are cleaved as a signal peptide. A disulfide bridge connects residues Cys-51 and Cys-59. Residues Gln-56 and Trp-104 each coordinate substrate. Asn-142 is a Ca(2+) binding site. His-143 contacts substrate. Cys-171 and Cys-185 are joined by a disulfide. Glu-183 and Asp-196 together coordinate Ca(2+). The N-linked (GlcNAc...) asparagine glycan is linked to Asn-218. Position 225 (Arg-225) interacts with substrate. Residues Asp-227, His-231, and Glu-251 each contribute to the Ca(2+) site. The Nucleophile role is filled by Asp-227. Residue 230–231 (KH) coordinates substrate. The active-site Proton donor is Glu-251. Gly-255 serves as a coordination point for substrate. Cys-261 and Cys-304 are disulfide-bonded. 2 residues coordinate substrate: Asp-318 and Arg-365. Cys-461 and Cys-496 are disulfide-bonded.

This sequence belongs to the glycosyl hydrolase 13 family. Requires Ca(2+) as cofactor.

The enzyme catalyses Endohydrolysis of (1-&gt;4)-alpha-D-glucosidic linkages in polysaccharides containing three or more (1-&gt;4)-alpha-linked D-glucose units.. This is Alpha-amylase A (amyA) from Aspergillus awamori (Black koji mold).